We begin with the raw amino-acid sequence, 1355 residues long: Phospholipid-transporting ATPase DRS2 (1355 aa).

Positions 1 to 15 are enriched in basic and acidic residues; sequence MNDDRETPPKRKPGE. Positions 1–50 are disordered; the sequence is MNDDRETPPKRKPGEDDTLFDIDFLDDTTSHSGSRSKVTNSHANANYIPP. The interval 1–104 is involved in autoinhibition; the sequence is MNDDRETPPK…SDAYQPQSLR (104 aa). The Cytoplasmic segment spans residues 1-221; it reads MNDDRETPPK…TFLPKFLFQE (221 aa). A compositionally biased stretch (acidic residues) spans 16–26; the sequence is DDTLFDIDFLD. The span at 30–44 shows a compositional bias: polar residues; it reads SHSGSRSKVTNSHAN. S102 carries the post-translational modification Phosphoserine. A helical membrane pass occupies residues 222–242; that stretch reads FSKYANLFFLCTSAIQQVPHV. Positions 237 to 238 are involved in phosphatidylserine substrate recognition; the sequence is QQ. Over 243–246 the chain is Lumenal; that stretch reads SPTN. A helical membrane pass occupies residues 247-267; the sequence is RYTTIGTLLVVLIVSAMKECI. Topologically, residues 268 to 449 are cytoplasmic; the sequence is EDIKRANSDK…VEKIINRQII (182 aa). Residues 450 to 470 traverse the membrane as a helical segment; it reads ALFTVLIVLILISSIGNVIMS. At 471-490 the chain is on the lumenal side; sequence TADAKHLSYLYLEGTNKAGL. Residues 491-511 form a helical membrane-spanning segment; sequence FFKDFLTFWILFSNLVPISLF. Topologically, residues 512 to 1012 are cytoplasmic; sequence VTVELIKYYQ…WSYQRISVAI (501 aa). Residue D560 is the 4-aspartylphosphate intermediate of the active site. ATP is bound by residues D560, K561, T562, E655, F698, S700, K703, K721, R755, T756, T835, G836, D837, R928, and K934. A Mg(2+)-binding site is contributed by D560. T562 contacts Mg(2+). D954 is a Mg(2+) binding site. ATP contacts are provided by N957 and D958. A Mg(2+)-binding site is contributed by D958. Residues 1013–1033 form a helical membrane-spanning segment; sequence LYSFYKNTALYMTQFWYVFAN. Topologically, residues 1034 to 1043 are lumenal; that stretch reads AFSGQSIMES. The helical transmembrane segment at 1044-1064 threads the bilayer; it reads WTMSFYNLFFTVWPPFVIGVF. Topologically, residues 1065-1094 are cytoplasmic; it reads DQFVSSRLLERYPQLYKLGQKGQFFSVYIF. The helical transmembrane segment at 1095 to 1115 threads the bilayer; it reads WGWIINGFFHSAIVFIGTILI. Over 1116-1131 the chain is Lumenal; it reads YRYGFALNMHGELADH. The chain crosses the membrane as a helical span at residues 1132–1152; sequence WSWGVTVYTTSVIIVLGKAAL. K1149 lines the a 1,2-diacyl-sn-glycero-3-phospho-(1D-myo-inositol 4-phosphate) pocket. The Cytoplasmic portion of the chain corresponds to 1153-1161; the sequence is VTNQWTKFT. A helical transmembrane segment spans residues 1162 to 1182; the sequence is LIAIPGSLLFWLIFFPIYASI. The Lumenal segment spans residues 1183-1202; sequence FPHANISREYYGVVKHTYGS. A helical transmembrane segment spans residues 1203–1223; that stretch reads GVFWLTLIVLPIFALVRDFLW. R1219, W1223, K1224, Y1235, and H1236 together coordinate a 1,2-diacyl-sn-glycero-3-phospho-(1D-myo-inositol 4-phosphate). Residues 1224–1355 lie on the Cytoplasmic side of the membrane; it reads KYYKRMYEPE…SSRDDISFDI (132 aa). The interval 1230–1282 is interaction with GEA2; it reads YEPETYHVIQEMQKYNISDSRPHVQQFQNAIRKVRQVQRMKKQRGFAFSQAEE. Positions 1231–1309 are involved in autoinhibition; it reads EPETYHVIQE…KYGELQDASA (79 aa). A disordered region spans residues 1305 to 1355; that stretch reads QDASANPFNDNNGLGSNDFESAEPFIENPFADGNQNSNRFSSSRDDISFDI. A compositionally biased stretch (polar residues) spans 1307–1323; the sequence is ASANPFNDNNGLGSNDF. The span at 1346–1355 shows a compositional bias: basic and acidic residues; sequence SSRDDISFDI.

This sequence belongs to the cation transport ATPase (P-type) (TC 3.A.3) family. Type IV subfamily. As to quaternary structure, component of a flippase complex consisting of DRS2 and CDC50. Interacts with CDC50; the interaction is direct, is required for their mutual export from the endoplasmic reticulum, and preferentially occurs when DRS2 is in the E2P state. Interacts (via C-terminus) with GEA2 (via SEC7 domain); the interaction is direct. Interacts with GEA1. The cofactor is Mg(2+).

It localises to the golgi apparatus. The protein localises to the trans-Golgi network membrane. The protein resides in the endosome membrane. The catalysed reaction is ATP + H2O + phospholipidSide 1 = ADP + phosphate + phospholipidSide 2.. The enzyme catalyses a 1,2-diacyl-sn-glycero-3-phospho-L-serine(out) + ATP + H2O = a 1,2-diacyl-sn-glycero-3-phospho-L-serine(in) + ADP + phosphate + H(+). It catalyses the reaction a 1,2-diacyl-sn-glycero-3-phosphoethanolamine(out) + ATP + H2O = a 1,2-diacyl-sn-glycero-3-phosphoethanolamine(in) + ADP + phosphate + H(+). With respect to regulation, allosterically activated by binding 1,2-diacyl-sn-glycero-3-phospho-(1D-myo-inositol 4-phosphate) (phosphatidylinositol 4-phosphate). Inhibited by orthovanadate, N-ethylmaleimide, trifluoroberyllate and tetrafluoroaluminate; orthovanadate and N-ethylmaleimide inhibit phosphorylation of the active site aspartic acid. The ATPase activity is not potently stimulated by phosphatidylinositol 3-phosphate and phosphatidylinositol 5-phosphate, phosphatidylinositol 4,5-bisphosphate or phosphatidylcholine. Not inhibited by azide. Functionally, catalytic component of a P4-ATPase flippase complex which catalyzes the hydrolysis of ATP coupled to the transport of phosphatidylserine and small amounts of ethanolamine from the lumen to the cytosolic leaflet of the trans-Golgi network and ensures the maintenance of asymmetric distribution of phospholipids. Contributes to clathrin-coated vesicle formation, endocytosis, and protein trafficking between the Golgi and endosomal system. Does not appear to transport phosphatidylcholine or sphingomyelin. This chain is Phospholipid-transporting ATPase DRS2, found in Saccharomyces cerevisiae (strain ATCC 204508 / S288c) (Baker's yeast).